We begin with the raw amino-acid sequence, 149 residues long: Large ribosomal subunit protein uL15 (149 aa).

The disordered stretch occupies residues 14–57; it reads KQRKRVGRGSGSGWGCTSGKGNKGQNARSGGGVRPGFEGGQMPL. Composition is skewed to gly residues over residues 21 to 35 and 42 to 52; these read RGSGSGWGCTSGKGN and SGGGVRPGFEG.

Belongs to the universal ribosomal protein uL15 family. In terms of assembly, part of the 50S ribosomal subunit.

Functionally, binds to the 23S rRNA. The sequence is that of Large ribosomal subunit protein uL15 from Oleidesulfovibrio alaskensis (strain ATCC BAA-1058 / DSM 17464 / G20) (Desulfovibrio alaskensis).